The sequence spans 701 residues: GKSEEPNCACDQFRCGNGKCIPEAWKCNNMDECGDSSDEEICAKEANPPTATAFQPCAYNQFQCLSRFTKVYTCLAESLKCDGNIDCLDLGDEIDCDVPTCGQWLKYFYGTFNSPNYPDFYPPGSNCTWLIDTGDHRKVILCFTDFKLDGTGYGDYVKIYDGLEENPHKLLRVLTAFDSHAPLTVVSSSGQIRVHFCADKVNAARGFNATYQVDGFCLPWEIPCGGNWGCYTEQQRCDGYWHCPNGRDEINCTMCQKEEFPCSRNGVCYPRSDRCNYQNHCPNGSDEKNCFFCQPGNFHCKNNRCVFESWVCDSQDDCGDGSDEENCPVIVPTRVITAAVIGSLICGLLLVIALGCTCKLYSLRMFERRSFETQLSRVEAELLRREAPPSYGQLIAQGLIPPVEDFPVCSPNQASVLENLRLAVRSQLGFTSVRLPMAGRSSNIWNRIFNFARSRHSGSLALVSADGDEVVPSQSTSREPERNHTHRSLFSVESDDTDTENERRDTAGASGGVAAPLPQKVPPTTAVEATVGACASSSTQSARGGHADNGRDVTSVEPPSVSPARHQLTSALSRMTQGLRWVRFTLGRSSSVSQNQSPLRQLDNGVSGREDDDDVEMLIPVSDGSSDFDVNDCSRPLLDLASDQGQGLRQPYSATNPGVRPSNRDGPCERCGIVHTAQIPDTCLEVTLKNETSDDEALLLC.

The Extracellular segment spans residues 1–334 (GKSEEPNCAC…ENCPVIVPTR (334 aa)). LDL-receptor class A domains are found at residues 7–43 (NCAC…EICA) and 56–97 (PCAY…IDCD). 7 cysteine pairs are disulfide-bonded: C8-C20, C15-C33, C27-C42, C57-C74, C64-C87, C81-C96, and C101-C127. One can recognise a CUB domain in the interval 101 to 214 (CGQWLKYFYG…RGFNATYQVD (114 aa)). Residues N126 and N208 are each glycosylated (N-linked (GlcNAc...) asparagine). 3 consecutive LDL-receptor class A domains span residues 216-253 (FCLP…INCT), 254-291 (MCQK…KNCF), and 292-328 (FCQP…ENCP). 9 disulfides stabilise this stretch: C217-C230, C224-C243, C237-C252, C255-C268, C262-C281, C275-C290, C293-C305, C300-C318, and C312-C327. N-linked (GlcNAc...) asparagine glycosylation is present at N251. An N-linked (GlcNAc...) asparagine glycan is attached at N283. The helical transmembrane segment at 335-355 (VITAAVIGSLICGLLLVIALG) threads the bilayer. Residues 356-701 (CTCKLYSLRM…TSDDEALLLC (346 aa)) lie on the Cytoplasmic side of the membrane. Disordered regions lie at residues 465 to 520 (ADGD…LPQK), 535 to 565 (ASSS…SPAR), 590 to 612 (SSVS…REDD), and 643 to 665 (DQGQ…SNRD). 2 stretches are compositionally biased toward polar residues: residues 590–599 (SSVSQNQSPL) and 643–656 (DQGQ…SATN).

The protein belongs to the LDLR family. In terms of assembly, may interact with RACK1, ZFYVE9 and NMRK2.

It is found in the membrane. The protein resides in the coated pit. Probable receptor, which may be involved in the internalization of lipophilic molecules and/or signal transduction. May act as a tumor suppressor. This chain is Low-density lipoprotein receptor-related protein 12 (LRP12), found in Macaca fascicularis (Crab-eating macaque).